Reading from the N-terminus, the 1092-residue chain is Rho GTPase-activating protein 7 (1092 aa).

Residues 11-78 form the SAM domain; sequence LTQIEAKEAC…LNKCAVMKLE (68 aa). Phosphoserine occurs at positions 86, 89, and 129. Disordered stretches follow at residues 121 to 179, 297 to 330, 409 to 434, and 492 to 553; these read PKQD…DATT, RSVS…TRSL, GPGH…NSSS, and SDEG…SGVG. A compositionally biased stretch (polar residues) spans 130 to 143; sequence PDNSRLQSATSHES. 2 stretches are compositionally biased toward low complexity: residues 154 to 174 and 299 to 325; these read VASV…AAHS and VSNS…SPVT. Residues 275–448 are focal adhesion-targeting (FAT); sequence QLNCVEISAL…RLSIYDNVPG (174 aa). S322 carries the phosphoserine modification. Positions 415-426 are enriched in basic and acidic residues; that stretch reads LRRENSHDSPKE. Over residues 500 to 512 the composition is skewed to polar residues; the sequence is ALDSVSPCPSSPK. Over residues 514 to 526 the composition is skewed to basic and acidic residues; the sequence is IHLDVDHDRRTPS. Residues 527–536 show a composition bias toward polar residues; the sequence is DLDSTGNSLN. Residues 615 to 637 form a polybasic cluster (PBR) region; it reads KHGFSWAVPKFMKRIKVPDYKDR. The region spanning 642–848 is the Rho-GAP domain; the sequence is VPLTVNVQRS…HMIAECKKLF (207 aa). In terms of domain architecture, START spans 878 to 1085; the sequence is NSDQPADYRH…RDSFSNQNTE (208 aa).

As to quaternary structure, interacts with EF1A1, facilitates EF1A1 distribution to the membrane periphery and ruffles upon growth factor stimulation and suppresses cell migration. Interacts with tensin TNS1 (via N-terminus); the interaction is decreased by phosphorylation of TNS1. Interacts with TNS3 and PTEN; in resting cells, interacts with TNS3 (via C2 tensin-type domain) but, following growth factor stimulation, TNS3 and PTEN are phosphorylated which leads to weakened interaction with TNS3 and enhanced interaction with PTEN. Interacts (via C-terminus) with tensin TNS4 (via SH2 domain); the interaction is independent of tyrosine phosphorylation of DLC1. As to expression, widely expressed with the highest levels in heart, liver and lung.

It localises to the cytoplasm. Its subcellular location is the cell junction. The protein resides in the focal adhesion. The protein localises to the membrane. Functionally, functions as a GTPase-activating protein for the small GTPases RHOA, RHOB, RHOC and CDC42, terminating their downstream signaling. This induces morphological changes and detachment through cytoskeletal reorganization, playing a critical role in biological processes such as cell migration and proliferation. Also functions in vivo as an activator of the phospholipase PLCD1. Active DLC1 increases cell migration velocity but reduces directionality. Required for growth factor-induced epithelial cell migration; in resting cells, interacts with TNS3 while PTEN interacts with the p85 regulatory subunit of the PI3K kinase complex but growth factor stimulation induces phosphorylation of TNS3 and PTEN, causing them to change their binding preference so that PTEN interacts with DLC1 and TNS3 interacts with p85. The PTEN-DLC1 complex translocates to the posterior of migrating cells to activate RHOA while the TNS3-p85 complex translocates to the leading edge of migrating cells to promote RAC1 activation. The sequence is that of Rho GTPase-activating protein 7 (Dlc1) from Mus musculus (Mouse).